The sequence spans 298 residues: N-acetylmuramic acid 6-phosphate etherase (298 aa).

Residues Ile-55–Lys-218 form the SIS domain. Residue Glu-83 is the Proton donor of the active site. The active site involves Glu-114.

This sequence belongs to the GCKR-like family. MurNAc-6-P etherase subfamily. Homodimer.

It carries out the reaction N-acetyl-D-muramate 6-phosphate + H2O = N-acetyl-D-glucosamine 6-phosphate + (R)-lactate. The protein operates within amino-sugar metabolism; 1,6-anhydro-N-acetylmuramate degradation. It functions in the pathway amino-sugar metabolism; N-acetylmuramate degradation. It participates in cell wall biogenesis; peptidoglycan recycling. Its function is as follows. Specifically catalyzes the cleavage of the D-lactyl ether substituent of MurNAc 6-phosphate, producing GlcNAc 6-phosphate and D-lactate. Together with AnmK, is also required for the utilization of anhydro-N-acetylmuramic acid (anhMurNAc) either imported from the medium or derived from its own cell wall murein, and thus plays a role in cell wall recycling. This is N-acetylmuramic acid 6-phosphate etherase from Escherichia fergusonii (strain ATCC 35469 / DSM 13698 / CCUG 18766 / IAM 14443 / JCM 21226 / LMG 7866 / NBRC 102419 / NCTC 12128 / CDC 0568-73).